Here is a 352-residue protein sequence, read N- to C-terminus: MAIRVLIVDDSATARTVLKDVLSKDSEIEVIATAPDAYVARDKIVQLKPDVICLDVEMPRMDGISFLKKIMKYFPTPVLMVSSLTQDGAQVTFDALEAGAIDYVAKPHSNIYDGIDEIQKELIQKVKMVASSNLSARIEAAKAKTSTLEYKPKATYSLAQTTNKLIAIGASTGGTVALAELIARFTKDTPGVVVVQHMPSGFTNSFAQRLNSLCEVEVKEAEDGDIIGRGRVLVAPGDLHMVVRRDGGNYRVKLGTGEKISGHRPSVDVLFNSVASHVGSNAIGVLLTGMGSDGAKGMLKMKTSGASTIAQDEKSSIVWGMPKVAYEIGAVDFVEPLSNIDVKIASLLSERK.

The Response regulatory domain maps to 4–121 (RVLIVDDSAT…YDGIDEIQKE (118 aa)). 4-aspartylphosphate is present on D55. Residues 159–351 (AQTTNKLIAI…VKIASLLSER (193 aa)) enclose the CheB-type methylesterase domain. Active-site residues include S171, H197, and D293.

It belongs to the CheB family. Phosphorylated by CheA. Phosphorylation of the N-terminal regulatory domain activates the methylesterase activity.

The protein localises to the cytoplasm. The catalysed reaction is [protein]-L-glutamate 5-O-methyl ester + H2O = L-glutamyl-[protein] + methanol + H(+). It carries out the reaction L-glutaminyl-[protein] + H2O = L-glutamyl-[protein] + NH4(+). In terms of biological role, involved in chemotaxis. Part of a chemotaxis signal transduction system that modulates chemotaxis in response to various stimuli. Catalyzes the demethylation of specific methylglutamate residues introduced into the chemoreceptors (methyl-accepting chemotaxis proteins or MCP) by CheR. Also mediates the irreversible deamidation of specific glutamine residues to glutamic acid. In Sulfurimonas denitrificans (strain ATCC 33889 / DSM 1251) (Thiomicrospira denitrificans (strain ATCC 33889 / DSM 1251)), this protein is Protein-glutamate methylesterase/protein-glutamine glutaminase.